Here is a 353-residue protein sequence, read N- to C-terminus: GTPase Obg (353 aa).

The region spanning 1–159 is the Obg domain; that stretch reads MKFLDEAKVY…RWIWLRLKLI (159 aa). The OBG-type G domain occupies 160-327; the sequence is ADAGLVGLPN…ALRALAAVIG (168 aa). GTP is bound by residues 166 to 173, 191 to 195, 212 to 215, 279 to 282, and 308 to 310; these read GLPNAGKS, FTTLH, DIPG, NKID, and SGV. Mg(2+)-binding residues include Ser173 and Thr193.

It belongs to the TRAFAC class OBG-HflX-like GTPase superfamily. OBG GTPase family. As to quaternary structure, monomer. Mg(2+) is required as a cofactor.

The protein localises to the cytoplasm. An essential GTPase which binds GTP, GDP and possibly (p)ppGpp with moderate affinity, with high nucleotide exchange rates and a fairly low GTP hydrolysis rate. Plays a role in control of the cell cycle, stress response, ribosome biogenesis and in those bacteria that undergo differentiation, in morphogenesis control. The polypeptide is GTPase Obg (Rhodopseudomonas palustris (strain BisB5)).